The primary structure comprises 368 residues: Phospho-N-acetylmuramoyl-pentapeptide-transferase (368 aa).

A run of 10 helical transmembrane segments spans residues Leu31–Leu51, Thr73–Leu93, Val98–Met118, Phe134–Thr154, Gly175–Ser195, Val213–Ala233, Val249–Ala269, Val271–Leu291, Ile296–Val316, and Lys345–Leu365.

Belongs to the glycosyltransferase 4 family. MraY subfamily. Mg(2+) is required as a cofactor.

It is found in the cell inner membrane. The enzyme catalyses UDP-N-acetyl-alpha-D-muramoyl-L-alanyl-gamma-D-glutamyl-meso-2,6-diaminopimeloyl-D-alanyl-D-alanine + di-trans,octa-cis-undecaprenyl phosphate = di-trans,octa-cis-undecaprenyl diphospho-N-acetyl-alpha-D-muramoyl-L-alanyl-D-glutamyl-meso-2,6-diaminopimeloyl-D-alanyl-D-alanine + UMP. It participates in cell wall biogenesis; peptidoglycan biosynthesis. In terms of biological role, catalyzes the initial step of the lipid cycle reactions in the biosynthesis of the cell wall peptidoglycan: transfers peptidoglycan precursor phospho-MurNAc-pentapeptide from UDP-MurNAc-pentapeptide onto the lipid carrier undecaprenyl phosphate, yielding undecaprenyl-pyrophosphoryl-MurNAc-pentapeptide, known as lipid I. This Leptospira interrogans serogroup Icterohaemorrhagiae serovar copenhageni (strain Fiocruz L1-130) protein is Phospho-N-acetylmuramoyl-pentapeptide-transferase.